Here is a 73-residue protein sequence, read N- to C-terminus: Large ribosomal subunit protein uL29 (73 aa).

This sequence belongs to the universal ribosomal protein uL29 family.

The protein is Large ribosomal subunit protein uL29 (rpmC) of Aquifex aeolicus (strain VF5).